Consider the following 1790-residue polypeptide: MDIIQGLIQQPKIQSVDETIPTLCDRVENSTLISDRRSAVLGLKAFSRQYRESVIASGLKPLLNTLKRDYMDEDSVKAILETILILFIRGDGHDDLTRGWISQQSRLQNGKYPSPLVMKQEKEQVDQFSLWIADALTQSEDLIHLLVEFWEIDNFHIRLYTIQLLEAVMATRPLKARSALISLPTSISTMVSLLDDMHEPIRDEAILLLMAVVNDSPHVQKLVAFENIFERLFSIIEEEGGLRGSLVVNDCLSLINNILKYNTSNQTLFLETGNLPKLAHLLSEPISQDEVFFWNDQRIVNINTALDIVSLTVEPGNTVTTKHQNALLDSSVLMVVLRLAFFHNIPKKVRPVALLTAANMVRSNEHAQLEFSKIDVPYFDPSLPVNSTANGGPIKLIPVVSILINWMLYANSVHTFDTRVACSRLLKAYFMDNFDLQRDFLLKQVQLCNNSTNNVGDNAKENGGSNKSDKESDSDKDTDGKDGTEYEGSFKANLFEVLLNYDAELNLNPFKLFFTTDIFMFFFQQDHKYSEELREITRNVTTGNDLEDEEPLKAIQTISELLTTSLTAADIRIPISYLTFLIYWLFGDFKATNDFLSDKSVIKSLLSFSYQIQDEDVTIKCLVTMLLGVAYEFSSKESPFPRKEYFEFITKTLGKDNYASRIKQFKKDSYFSKVDMNEDSILTPELDETGLPKVYFSTYFIQLFNENIYRIRTALSHDPDEEPINKISFEEVEKLQRQCTKLKGEITSLQTETESTHENLTEKLIALTNEHKELDEKYQILNSSHSSLKENFSILETELKNVRDSLDEMTQLRDVLETKDKENQTALLEYKSTIHKQEDSIKTLEKGLETILSQKKKAEDGINKMGKDLFALSREMQAVEENCKNLQKEKDKSNVNHQKETKSLKEDIAAKITEIKAINENLEEMKIQCNNLSKEKEHISKELVEYKSRFQSHDNLVAKLTEKLKSLANNYKDMQAENESLIKAVEESKNESSIQLSNLQNKIDSMSQEKENFQIERGSIEKNIEQLKKTISDLEQTKEEIISKSDSSKDEYESQISLLKEKLETATTANDENVNKISELTKTREELEAELAAYKNLKNELETKLETSEKALKEVKENEEHLKEEKIQLEKEATETKQQLNSLRANLESLEKEHEDLAAQLKKYEEQIANKERQYNEEISQLNDEITSTQQENESIKKKNDELEGEVKAMKSTSEEQSNLKKSEIDALNLQIKELKKKNETNEASLLESIKSVESETVKIKELQDECNFKEKEVSELEDKLKASEDKNSKYLELQKESEKIKEELDAKTTELKIQLEKITNLSKAKEKSESELSRLKKTSSEERKNAEEQLEKLKNEIQIKNQAFEKERKLLNEGSSTITQEYSEKINTLEDELIRLQNENELKAKEIDNTRSELEKVSLSNDELLEEKQNTIKSLQDEILSYKDKITRNDEKLLSIERDNKRDLESLKEQLRAAQESKAKVEEGLKKLEEESSKEKAELEKSKEMMKKLESTIESNETELKSSMETIRKSDEKLEQSKKSAEEDIKNLQHEKSDLISRINESEKDIEELKSKLRIEAKSGSELETVKQELNNAQEKIRINAEENTVLKSKLEDIERELKDKQAEIKSNQEEKELLTSRLKELEQELDSTQQKAQKSEEERRAEVRKFQVEKSQLDEKAMLLETKYNDLVNKEQAWKRDEDTVKKTTDSQRQEIEKLAKELDNLKAENSKLKEANEDRSEIDDLMLLVTDLDEKNAKYRSKLKDLGVEISSDEEDDEEDDEEDEEEGQVA.

The globular head stretch occupies residues 1-724; sequence MDIIQGLIQQ…LSHDPDEEPI (724 aa). 10 ARM repeats span residues 45-89, 127-170, 173-213, 215-260, 261-312, 314-362, 363-429, 431-512, 543-584, and 586-630; these read AFSR…LFIR, QFSL…AVMA, PLKA…MAVV, DSPH…NILK, YNTS…VSLT, EPGN…NMVR, SNEH…LKAY, MDNF…PFKL, GNDL…LIYW, and FGDF…LGVA. Residues 452–484 form a disordered region; sequence TNNVGDNAKENGGSNKSDKESDSDKDTDGKDGT. The tract at residues 465-487 is charged (hyper-hydrophilic); that stretch reads SNKSDKESDSDKDTDGKDGTEYE. A compositionally biased stretch (basic and acidic residues) spans 467–484; the sequence is KSDKESDSDKDTDGKDGT. The stretch at 725–1790 forms a coiled coil; it reads NKISFEEVEK…EEDEEEGQVA (1066 aa). Residues 991-1790 form a dispensable for the protein function region; sequence ESSIQLSNLQ…EEDEEEGQVA (800 aa). 6 disordered regions span residues 1185 to 1221, 1326 to 1351, 1485 to 1547, 1645 to 1667, 1722 to 1742, and 1762 to 1790; these read EITS…SNLK, KEKS…EEQL, GLKK…EDIK, QELD…EVRK, DNLK…SEID, and LKDL…GQVA. Positions 1194 to 1209 are enriched in basic and acidic residues; it reads ESIKKKNDELEGEVKA. 4 stretches are compositionally biased toward basic and acidic residues: residues 1485-1512, 1519-1547, 1655-1667, and 1722-1738; these read GLKK…KLES, TELK…EDIK, QKSE…EVRK, and DNLK…NEDR. At Ser-1770 the chain carries Phosphoserine. The segment covering 1770–1790 has biased composition (acidic residues); the sequence is SSDEEDDEEDDEEDEEEGQVA.

This sequence belongs to the VDP/USO1/EDE1 family. In terms of assembly, homodimer. Dimerizes by parallel association of the tails, resulting in an elongated structure with two globular head domains side by side, and a long rod-like tail structure.

The protein resides in the cytoplasm. The protein localises to the cytoskeleton. It is found in the cytoplasmic vesicle membrane. It localises to the endoplasmic reticulum membrane. Its subcellular location is the golgi apparatus membrane. In terms of biological role, required for protein transport from the ER to the Golgi complex. This is Intracellular protein transport protein USO1 (USO1) from Saccharomyces cerevisiae (strain ATCC 204508 / S288c) (Baker's yeast).